The chain runs to 218 residues: Putative glutamine transport system permease protein GlnP (218 aa).

The ABC transmembrane type-1 domain maps to 19-208; it reads TLVTLKYSII…ILVMLISFIA (190 aa). A run of 4 helical transmembrane segments spans residues 25-45, 57-79, 86-108, and 187-207; these read YSII…ICKV, FYTS…FAAP, FSVF…SEVI, and FFPM…ISFI.

This sequence belongs to the binding-protein-dependent transport system permease family. HisMQ subfamily.

It localises to the cell inner membrane. In terms of biological role, part of the binding-protein-dependent transport system for glutamine; probably responsible for the translocation of the substrate across the membrane. This chain is Putative glutamine transport system permease protein GlnP (glnP), found in Rickettsia typhi (strain ATCC VR-144 / Wilmington).